The following is a 166-amino-acid chain: NAD(P)H-quinone oxidoreductase subunit I, chloroplastic (166 aa).

4Fe-4S ferredoxin-type domains are found at residues 55-84 (GRIH…VDWK) and 95-124 (LNYS…MTEE). [4Fe-4S] cluster is bound by residues Cys-64, Cys-67, Cys-70, Cys-74, Cys-104, Cys-107, Cys-110, and Cys-114.

Belongs to the complex I 23 kDa subunit family. As to quaternary structure, NDH is composed of at least 16 different subunits, 5 of which are encoded in the nucleus. The cofactor is [4Fe-4S] cluster.

Its subcellular location is the plastid. It localises to the chloroplast thylakoid membrane. The catalysed reaction is a plastoquinone + NADH + (n+1) H(+)(in) = a plastoquinol + NAD(+) + n H(+)(out). The enzyme catalyses a plastoquinone + NADPH + (n+1) H(+)(in) = a plastoquinol + NADP(+) + n H(+)(out). Its function is as follows. NDH shuttles electrons from NAD(P)H:plastoquinone, via FMN and iron-sulfur (Fe-S) centers, to quinones in the photosynthetic chain and possibly in a chloroplast respiratory chain. The immediate electron acceptor for the enzyme in this species is believed to be plastoquinone. Couples the redox reaction to proton translocation, and thus conserves the redox energy in a proton gradient. In Silphium perfoliatum (Cup plant), this protein is NAD(P)H-quinone oxidoreductase subunit I, chloroplastic.